Here is a 212-residue protein sequence, read N- to C-terminus: 3-isopropylmalate dehydratase small subunit (212 aa).

This sequence belongs to the LeuD family. LeuD type 1 subfamily. Heterodimer of LeuC and LeuD.

It catalyses the reaction (2R,3S)-3-isopropylmalate = (2S)-2-isopropylmalate. Its pathway is amino-acid biosynthesis; L-leucine biosynthesis; L-leucine from 3-methyl-2-oxobutanoate: step 2/4. In terms of biological role, catalyzes the isomerization between 2-isopropylmalate and 3-isopropylmalate, via the formation of 2-isopropylmaleate. The protein is 3-isopropylmalate dehydratase small subunit of Thioalkalivibrio sulfidiphilus (strain HL-EbGR7).